We begin with the raw amino-acid sequence, 640 residues long: Uromodulin (640 aa).

Residues 1–24 (MGQPSLTWMLMVVVASWFITTAAT) form the signal peptide. Positions 28 to 64 (EARWCSECHSNATCTEDEAVTTCTCQEGFTGDGLTCV) constitute an EGF-like 1 domain. 21 disulfides stabilise this stretch: Cys-32–Cys-41, Cys-35–Cys-50, Cys-52–Cys-63, Cys-69–Cys-83, Cys-77–Cys-92, Cys-94–Cys-106, Cys-112–Cys-126, Cys-120–Cys-135, Cys-137–Cys-148, Cys-150–Cys-161, Cys-155–Cys-170, Cys-174–Cys-267, Cys-195–Cys-282, Cys-217–Cys-255, Cys-223–Cys-287, Cys-248–Cys-256, Cys-297–Cys-306, Cys-300–Cys-315, Cys-317–Cys-347, Cys-335–Cys-425, and Cys-366–Cys-389. Asn-38 carries N-linked (GlcNAc...) asparagine glycosylation. In terms of domain architecture, EGF-like 2; calcium-binding spans 65–107 (DLDECAIPGAHNCSANSSCVNTPGSFSCVCPEGFRLSPGLGCT). 2 N-linked (GlcNAc...) asparagine glycosylation sites follow: Asn-76 and Asn-80. The EGF-like 3; calcium-binding domain maps to 108-149 (DVDECAEPGLSHCHALATCVNVVGSYLCVCPAGYRGDGWHCE). Positions 150-171 (CSPGSCGPGLDCVPEGDALVCA) are beta hairpin. Residues 172–291 (DPCQAHRTLD…CHLAYCTDPS (120 aa)) are D10C. N-linked (GlcNAc...) (complex) asparagine glycosylation is present at Asn-232. Asn-275 carries N-linked (GlcNAc...) (high mannose) asparagine glycosylation. The EGF-like 4 domain occupies 292 to 323 (SVEGTCEECSIDEDCKSNNGRWHCQCKQDFNI). A glycan (N-linked (GlcNAc...) (complex) asparagine) is linked at Asn-322. Residues 334 to 429 (ECGANDMKVS…KINFACSYPL (96 aa)) form a ZP-N region. A ZP domain is found at 334 to 589 (ECGANDMKVS…PTCSGTRFRS (256 aa)). Asn-396 carries an N-linked (GlcNAc...) (complex) asparagine glycan. The interval 430–453 (DMKVSLKTALQPMVSALNIRVGGT) is flexible ZP-N/ZP-C linker; important for secretion and polymerization into filaments. Residues 454–465 (GMFTVRMALFQT) form an internal hydrophobic patch (IHP) region. Positions 454–589 (GMFTVRMALF…PTCSGTRFRS (136 aa)) are ZP-C. 3 disulfide bridges follow: Cys-506/Cys-566, Cys-527/Cys-582, and Cys-571/Cys-578. Asn-513 carries N-linked (GlcNAc...) (complex) asparagine; alternate glycosylation. Residue Asn-513 is glycosylated (N-linked (GlcNAc...) (high mannose) asparagine; alternate). The interval 586 to 589 (RFRS) is essential for cleavage by HPN. The interval 598-606 (VLNLGPITR) is external hydrophobic patch (EHP); regulates polymerization into filaments. The GPI-anchor amidated serine moiety is linked to residue Ser-614. Positions 615–640 (RAFSSLGLLKVWLPLLLSATLTLTFQ) are cleaved as a propeptide — removed in mature form.

Homodimer that then polymerizes into long filaments. The filaments can additionally assemble laterally to form a sheet. The filaments consist of a zigzag-shaped backbone with laterally protruding arms which interact with bacterial adhesin fimH. Two fimH molecules can bind to a single UMOD monomer. In terms of processing, N-glycosylated. N-glycan heterogeneity at Asn-232: Hex7HexNAc6 (major) and dHex1Hex7HexNAc6 (minor); at Asn-322: dHex1Hex6HexNAc5 (minor), dHex1Hex7HexNAc6 (major) and dHex1Hex8HexNAc7 (minor); at Asn-396: Hex6HexNAc5 (major), dHex1Hex6HexNAc5 (minor) and Hex7HexNAc6 (minor). Glycosylated Asn-232 interacts with E.coli adhesin fimH. Other complex glycosylation sites may serve as binding sites for proteins from other bacteria inclduding K.pneumoniae, P.aeruginosa and S.mitis. Post-translationally, proteolytically cleaved at a conserved C-terminal proteolytic cleavage site to generate the secreted form found in urine. This cleavage is catalyzed by HPN. Expressed in the tubular cells of the kidney. Most abundant protein in normal urine (at protein level). Synthesized exclusively in the kidney. Expressed exclusively by epithelial cells of the thick ascending limb of Henle's loop (TALH) and of distal convoluted tubule lumen.

The protein localises to the apical cell membrane. It is found in the basolateral cell membrane. Its subcellular location is the cell projection. The protein resides in the cilium membrane. It localises to the secreted. Functions in biogenesis and organization of the apical membrane of epithelial cells of the thick ascending limb of Henle's loop (TALH), where it promotes formation of complex filamentous gel-like structure that may play a role in the water barrier permeability. May serve as a receptor for binding and endocytosis of cytokines (IL-1, IL-2) and TNF. Facilitates neutrophil migration across renal epithelia. Functionally, in the urine, may contribute to colloid osmotic pressure, retards passage of positively charged electrolytes, and inhibits formation of liquid containing supersaturated salts and subsequent formation of salt crystals. Protects against urinary tract infections by binding to type 1 fimbriated E.coli. Binds to bacterial adhesin fimH which mediates the stable formation of bacterial aggregates, prevents the binding of E.coli to uroplakins UPK1A and UPK1B which act as urothelial receptors for type I fimbriae, and allows for pathogen clearance through micturation. Also promotes aggregation of other bacteria including K.pneumoniae, P.aeruginosa and S.mitis and so may also protect against other uropathogens. The protein is Uromodulin (UMOD) of Homo sapiens (Human).